The sequence spans 175 residues: Gamma-crystallin A (175 aa).

Beta/gamma crystallin 'Greek key' domains are found at residues 2–40 (GKIT…RVDV) and 41–83 (HSWF…RLIP). A connecting peptide region spans residues 84-88 (QHTGT). Beta/gamma crystallin 'Greek key' domains follow at residues 89-129 (FRMR…RVLE) and 130-172 (GSWV…RRVM).

Belongs to the beta/gamma-crystallin family.

Crystallins are the dominant structural components of the vertebrate eye lens. The sequence is that of Gamma-crystallin A (CRYGA) from Bos taurus (Bovine).